Reading from the N-terminus, the 251-residue chain is tRNA (guanine-N(7)-)-methyltransferase (251 aa).

E80, E105, D132, and D155 together coordinate S-adenosyl-L-methionine. Residue D155 is part of the active site. Residues K159, D191, and 228–231 (TKFE) contribute to the substrate site.

It belongs to the class I-like SAM-binding methyltransferase superfamily. TrmB family.

It carries out the reaction guanosine(46) in tRNA + S-adenosyl-L-methionine = N(7)-methylguanosine(46) in tRNA + S-adenosyl-L-homocysteine. It participates in tRNA modification; N(7)-methylguanine-tRNA biosynthesis. In terms of biological role, catalyzes the formation of N(7)-methylguanine at position 46 (m7G46) in tRNA. The sequence is that of tRNA (guanine-N(7)-)-methyltransferase from Histophilus somni (strain 129Pt) (Haemophilus somnus).